Reading from the N-terminus, the 341-residue chain is L-threonine 3-dehydrogenase (341 aa).

Residue cysteine 38 participates in Zn(2+) binding. Active-site charge relay system residues include threonine 40 and histidine 43. Zn(2+)-binding residues include histidine 63, glutamate 64, cysteine 93, cysteine 96, cysteine 99, and cysteine 107. Residues isoleucine 175, aspartate 195, arginine 200, 262–264 (LGI), and 286–287 (IY) contribute to the NAD(+) site.

Belongs to the zinc-containing alcohol dehydrogenase family. In terms of assembly, homotetramer. It depends on Zn(2+) as a cofactor.

The protein localises to the cytoplasm. It carries out the reaction L-threonine + NAD(+) = (2S)-2-amino-3-oxobutanoate + NADH + H(+). It participates in amino-acid degradation; L-threonine degradation via oxydo-reductase pathway; glycine from L-threonine: step 1/2. Catalyzes the NAD(+)-dependent oxidation of L-threonine to 2-amino-3-ketobutyrate. This is L-threonine 3-dehydrogenase from Alteromonas mediterranea (strain DSM 17117 / CIP 110805 / LMG 28347 / Deep ecotype).